Reading from the N-terminus, the 73-residue chain is Cx9C motif-containing protein 4, mitochondrial (73 aa).

A CHCH domain is found at 2–44 (SNPCQKEACAIQDCLLSHQYDDAKCAKVIDQLYICCSKFYNDN). Short sequence motifs (cx9C motif) lie at residues 5 to 15 (CQKEACAIQDC) and 26 to 36 (CAKVIDQLYIC). Disulfide bonds link Cys-5–Cys-36 and Cys-15–Cys-26.

Belongs to the CMC4 family.

Its subcellular location is the mitochondrion intermembrane space. This Saccharomyces cerevisiae (strain ATCC 204508 / S288c) (Baker's yeast) protein is Cx9C motif-containing protein 4, mitochondrial (CMC4).